The sequence spans 148 residues: MSVLDAAEIMDLIPNRYPILFMDKVDELNPGESIVCTKNVTINEEFFQGHFPGNPVMPGVLIIESLAQAASILILKTEKYQGKTAYLGAIDSAKFRKVVRPGDVLKLHVTMEKQRDNMGKVKCEAKVEDKVACSAELTFIVPDPKKKI.

Residue histidine 50 is part of the active site.

The protein belongs to the thioester dehydratase family. FabZ subfamily.

The protein resides in the cytoplasm. It catalyses the reaction a (3R)-hydroxyacyl-[ACP] = a (2E)-enoyl-[ACP] + H2O. Involved in unsaturated fatty acids biosynthesis. Catalyzes the dehydration of short chain beta-hydroxyacyl-ACPs and long chain saturated and unsaturated beta-hydroxyacyl-ACPs. The protein is 3-hydroxyacyl-[acyl-carrier-protein] dehydratase FabZ of Lactobacillus helveticus (strain DPC 4571).